A 629-amino-acid polypeptide reads, in one-letter code: tRNA uridine 5-carboxymethylaminomethyl modification enzyme MnmG (629 aa).

FAD-binding positions include 13–18, Val125, and Ser180; that span reads GGGHAG. 273-287 provides a ligand contact to NAD(+); sequence GPRYCPSIEDKVMRF. Residue Gln370 coordinates FAD.

Belongs to the MnmG family. In terms of assembly, homodimer. Heterotetramer of two MnmE and two MnmG subunits. Requires FAD as cofactor.

The protein localises to the cytoplasm. NAD-binding protein involved in the addition of a carboxymethylaminomethyl (cmnm) group at the wobble position (U34) of certain tRNAs, forming tRNA-cmnm(5)s(2)U34. The polypeptide is tRNA uridine 5-carboxymethylaminomethyl modification enzyme MnmG (Serratia proteamaculans (strain 568)).